Here is a 516-residue protein sequence, read N- to C-terminus: Maturase K (516 aa).

Belongs to the intron maturase 2 family. MatK subfamily.

The protein localises to the plastid. Its subcellular location is the chloroplast. In terms of biological role, usually encoded in the trnK tRNA gene intron. Probably assists in splicing its own and other chloroplast group II introns. This is Maturase K from Galanthus nivalis (Common snowdrop).